A 729-amino-acid polypeptide reads, in one-letter code: Bromo and FHA domain-containing protein DDB_G0267958 (729 aa).

The span at 46-79 (LPIPNTSNTNPPMNQSSSPTTTTTTPTTTTTPTT) shows a compositional bias: low complexity. Residues 46–83 (LPIPNTSNTNPPMNQSSSPTTTTTTPTTTTTPTTAEPA) are disordered. An FHA domain is found at 112–167 (LIIGSDTELADIQVVRPGIYPKHVEIIYDKEKKKFYLNPLIDPKDSDNVRLNFVPF). 3 stretches are compositionally biased toward low complexity: residues 208–221 (IPSN…NTPI), 229–275 (PPSS…ATKT), and 283–306 (PTKT…AVKK). Disordered regions lie at residues 208–361 (IPSN…MSCK) and 403–442 (SRRP…PKVP). The span at 310 to 341 (DDDYGDDYNEEEDDDDEEEEEEEEEEEEEEEV) shows a compositional bias: acidic residues. Positions 315-352 (DDYNEEEDDDDEEEEEEEEEEEEEEEVESKQIKVVNSK) form a coiled coil. Over residues 406 to 431 (PTAPVTPTKPTSTKKVTTPKKATVVK) the composition is skewed to low complexity. A Bromo domain is found at 498–617 (SNEKKEILKC…IELYKALSNS (120 aa)). A coiled-coil region spans residues 659–718 (SKNKEQTVPQEEDEEEEEEEEEEEEEEEEGEEGKEDEEEEEKEEEEGEENEEEEDVEIDD). The tract at residues 659-729 (SKNKEQTVPQ…EIDQESDDDQ (71 aa)) is disordered. Over residues 668 to 729 (QEEDEEEEEE…EIDQESDDDQ (62 aa)) the composition is skewed to acidic residues.

This chain is Bromo and FHA domain-containing protein DDB_G0267958, found in Dictyostelium discoideum (Social amoeba).